The sequence spans 181 residues: dTTP/UTP pyrophosphatase (181 aa).

Asp-67 acts as the Proton acceptor in catalysis.

It belongs to the Maf family. YhdE subfamily. The cofactor is a divalent metal cation.

It localises to the cytoplasm. It carries out the reaction dTTP + H2O = dTMP + diphosphate + H(+). It catalyses the reaction UTP + H2O = UMP + diphosphate + H(+). In terms of biological role, nucleoside triphosphate pyrophosphatase that hydrolyzes dTTP and UTP. May have a dual role in cell division arrest and in preventing the incorporation of modified nucleotides into cellular nucleic acids. In Latilactobacillus sakei subsp. sakei (strain 23K) (Lactobacillus sakei subsp. sakei), this protein is dTTP/UTP pyrophosphatase.